We begin with the raw amino-acid sequence, 409 residues long: Menaquinone reductase (409 aa).

Residues 11-15, 44-47, Arg-101, Val-125, Asp-288, and 300-301 each bind FAD; these read GAGPA, CGDG, and GI.

It belongs to the geranylgeranyl reductase family. The cofactor is FAD.

The enzyme catalyses menaquinone-9 + AH2 = beta-dihydromenaquinone-9 + A. It functions in the pathway quinol/quinone metabolism; menaquinone biosynthesis. Functionally, catalyzes the reduction of a single double bond in the isoprenoid tail of menaquinone (MK-9) in M.smegmatis, likely the beta-isoprene unit, forming the predominant form of menaquinone found in mycobacteria, MK-9(II-H2). In Mycolicibacterium smegmatis (strain ATCC 700084 / mc(2)155) (Mycobacterium smegmatis), this protein is Menaquinone reductase.